Here is a 437-residue protein sequence, read N- to C-terminus: Phosphomethylpyrimidine synthase (437 aa).

Substrate-binding positions include N69, M98, Y127, H163, 185 to 187 (SRG), 226 to 229 (DACR), and E265. H269 serves as a coordination point for Zn(2+). Substrate is bound at residue Y292. H333 serves as a coordination point for Zn(2+). [4Fe-4S] cluster-binding residues include C409, C412, and C416.

This sequence belongs to the ThiC family. It depends on [4Fe-4S] cluster as a cofactor.

It catalyses the reaction 5-amino-1-(5-phospho-beta-D-ribosyl)imidazole + S-adenosyl-L-methionine = 4-amino-2-methyl-5-(phosphooxymethyl)pyrimidine + CO + 5'-deoxyadenosine + formate + L-methionine + 3 H(+). The protein operates within cofactor biosynthesis; thiamine diphosphate biosynthesis. Functionally, catalyzes the synthesis of the hydroxymethylpyrimidine phosphate (HMP-P) moiety of thiamine from aminoimidazole ribotide (AIR) in a radical S-adenosyl-L-methionine (SAM)-dependent reaction. The polypeptide is Phosphomethylpyrimidine synthase (Clostridium botulinum (strain Kyoto / Type A2)).